Consider the following 121-residue polypeptide: Large ribosomal subunit protein eL18 (121 aa).

The protein belongs to the eukaryotic ribosomal protein eL18 family. As to quaternary structure, part of the 50S ribosomal subunit.

The polypeptide is Large ribosomal subunit protein eL18 (Thermococcus kodakarensis (strain ATCC BAA-918 / JCM 12380 / KOD1) (Pyrococcus kodakaraensis (strain KOD1))).